Consider the following 142-residue polypeptide: Small ribosomal subunit protein uS9 (142 aa).

This sequence belongs to the universal ribosomal protein uS9 family. As to quaternary structure, component of the small ribosomal subunit. Mature ribosomes consist of a small (40S) and a large (60S) subunit. The 40S subunit contains about 32 different proteins and 1 molecule of RNA (18S). The 60S subunit contains 45 different proteins and 3 molecules of RNA (25S, 5.8S and 5S).

The protein localises to the cytoplasm. In terms of biological role, component of the ribosome, a large ribonucleoprotein complex responsible for the synthesis of proteins in the cell. The small ribosomal subunit (SSU) binds messenger RNAs (mRNAs) and translates the encoded message by selecting cognate aminoacyl-transfer RNA (tRNA) molecules. The large subunit (LSU) contains the ribosomal catalytic site termed the peptidyl transferase center (PTC), which catalyzes the formation of peptide bonds, thereby polymerizing the amino acids delivered by tRNAs into a polypeptide chain. The nascent polypeptides leave the ribosome through a tunnel in the LSU and interact with protein factors that function in enzymatic processing, targeting, and the membrane insertion of nascent chains at the exit of the ribosomal tunnel. This Candida albicans (strain SC5314 / ATCC MYA-2876) (Yeast) protein is Small ribosomal subunit protein uS9 (RPS16A).